We begin with the raw amino-acid sequence, 309 residues long: D-alanine--D-alanine ligase (309 aa).

The 200-residue stretch at 105–304 (KQIWHSVGLP…FNDLVERILA (200 aa)) folds into the ATP-grasp domain. Position 135 to 190 (135 to 190 (LQELGGRVIVKPAREGSSIGMSIADNGRSLALALQHAAEFDDDLLVEQWVEGAEYT)) interacts with ATP. D258, E271, and N273 together coordinate Mg(2+).

Belongs to the D-alanine--D-alanine ligase family. The cofactor is Mg(2+). Mn(2+) is required as a cofactor.

Its subcellular location is the cytoplasm. It carries out the reaction 2 D-alanine + ATP = D-alanyl-D-alanine + ADP + phosphate + H(+). It participates in cell wall biogenesis; peptidoglycan biosynthesis. In terms of biological role, cell wall formation. The protein is D-alanine--D-alanine ligase of Idiomarina loihiensis (strain ATCC BAA-735 / DSM 15497 / L2-TR).